An 83-amino-acid chain; its full sequence is U25-theraphotoxin-Cg1a (83 aa).

The signal sequence occupies residues 1-23; sequence MRFHTLLFLSFLLLVSCALICTA. The propeptide occupies 24–48; that stretch reads QHPGLEKSGMFHENVGKGQHIEEKR. 3 disulfide bridges follow: Cys-50–Cys-66, Cys-57–Cys-71, and Cys-65–Cys-81.

The protein belongs to the neurotoxin 07 (Beta/delta-agtx) family. 03 (aga-4) subfamily. JZTX sub-subfamily. As to expression, expressed by the venom gland.

Its subcellular location is the secreted. In terms of biological role, inhibits TTX-sensitive sodium currents in rat dorsal root ganglion (DRG) neurons. In Chilobrachys guangxiensis (Chinese earth tiger tarantula), this protein is U25-theraphotoxin-Cg1a.